The sequence spans 291 residues: Verruculogen synthase (291 aa).

Residue tyrosine 68 is part of the active site.

This sequence belongs to the PhyH family. As to quaternary structure, homodimer. It depends on Fe cation as a cofactor.

It carries out the reaction fumitremorgin B + 2-oxoglutarate + AH2 + 2 O2 = verruculogen + succinate + A + CO2 + H2O. Its pathway is mycotoxin biosynthesis. In terms of biological role, verruculogen synthase; part of the gene cluster that mediates the biosynthesis of fumitremorgins, indole alkaloids that carry not only intriguing chemical structures, but also interesting biological and pharmacological activities. The biosynthesis of fumitremorgin-type alkaloids begins by condensation of the two amino acids L-tryptophan and L-proline to brevianamide F, catalyzed by the non-ribosomal peptide synthetase ftmA. Brevianamide F is then prenylated by the prenyltransferase ftmPT1/ftmB in the presence of dimethylallyl diphosphate, resulting in the formation of tryprostatin B. The three cytochrome P450 monooxygenases, ftmP450-1/ftmC, ftmP450-2/ftmE and ftmP450-3/FtmG, are responsible for the conversion of tryprostatin B to 6-hydroxytryprostatin B, tryprostatin A to fumitremorgin C and fumitremorgin C to 12,13-dihydroxyfumitremorgin C, respectively. The putative methyltransferase ftmMT/ftmD is expected for the conversion of 6-hydroxytryprostatin B to tryprostatin A. FtmPT2/FtmH catalyzes the prenylation of 12,13-dihydroxyfumitre-morgin C in the presence of dimethylallyl diphosphate, resulting in the formation of fumitremorgin B. Fumitremorgin B is further converted to verruculogen by ftmOx1/ftmF via the insertion of an endoperoxide bond between the two prenyl moieties. In some fungal species, verruculogen is further converted to fumitremorgin A, but the enzymes involved in this step have not been identified yet. The chain is Verruculogen synthase from Aspergillus fumigatus (Neosartorya fumigata).